The following is a 598-amino-acid chain: Integrator complex subunit 11 (598 aa).

Residues H68, H70, D72, H73, H157, and D178 each coordinate Zn(2+). Residues 68–73 (HFHLDH) carry the HXHXDH motif motif. Residue E203 is part of the active site. A Zn(2+)-binding site is contributed by H414. The short motif at 470–480 (PLPDAKRPRTM) is the Nuclear localization signal element.

It belongs to the metallo-beta-lactamase superfamily. RNA-metabolizing metallo-beta-lactamase-like family. INTS11 subfamily. In terms of assembly, component of the Integrator complex, composed of core subunits INTS1, INTS2, INTS3, INTS4, INTS5, INTS6, INTS7, INTS8, INTS9/RC74, INTS10, INTS11/CPSF3L, INTS12, INTS13, INTS14 and INTS15. The core complex associates with protein phosphatase 2A subunits PPP2CA and PPP2R1A, to form the Integrator-PP2A (INTAC) complex. INTS11 is part of the RNA endonuclease subcomplex, composed of INTS4, INTS9, INTS11 and inositol hexakisphosphate (InsP6). It depends on Zn(2+) as a cofactor.

Its subcellular location is the nucleus. The protein resides in the cytoplasm. Its function is as follows. RNA endonuclease component of the integrator complex, a multiprotein complex that terminates RNA polymerase II (Pol II) transcription in the promoter-proximal region of genes. The integrator complex provides a quality checkpoint during transcription elongation by driving premature transcription termination of transcripts that are unfavorably configured for transcriptional elongation: the complex terminates transcription by (1) catalyzing dephosphorylation of the C-terminal domain (CTD) of Pol II subunit POLR2A/RPB1 and SUPT5H/SPT5, (2) degrading the exiting nascent RNA transcript via endonuclease activity and (3) promoting the release of Pol II from bound DNA. The integrator complex is also involved in terminating the synthesis of non-coding Pol II transcripts, such as enhancer RNAs (eRNAs), small nuclear RNAs (snRNAs), telomerase RNAs and long non-coding RNAs (lncRNAs). Within the integrator complex, INTS11 constitutes the RNA endonuclease subunit that degrades exiting nascent RNA transcripts. In Danio rerio (Zebrafish), this protein is Integrator complex subunit 11 (cpsf3l).